A 283-amino-acid polypeptide reads, in one-letter code: Phospholipase C (283 aa).

The N-terminal stretch at 1-24 is a signal peptide; it reads MKKKVLALAAAITVVAPLQSVAFA. Positions 25–38 are excised as a propeptide; it reads HENDGGSKIKIVHR. Zn(2+) is bound by residues tryptophan 39, histidine 52, aspartate 93, histidine 107, histidine 156, aspartate 160, histidine 166, histidine 180, and glutamate 184. The region spanning 39 to 283 is the Zn-dependent PLC domain; that stretch reads WSAEDKHKEG…QLWFDTYGDR (245 aa).

It belongs to the bacterial zinc-metallophospholipase C family. Monomer. It depends on Zn(2+) as a cofactor.

The catalysed reaction is a 1,2-diacyl-sn-glycero-3-phosphocholine + H2O = phosphocholine + a 1,2-diacyl-sn-glycerol + H(+). Functionally, required, with sphingomyelinase, to effect target cell lysis (hemolysis). The chain is Phospholipase C (plc) from Bacillus cereus.